A 146-amino-acid chain; its full sequence is Prolactin-inducible protein homolog (146 aa).

The first 28 residues, 1–28 (MHLLQLLFRASPATLLLVLCLQLGANKA), serve as a signal peptide directing secretion. Position 29 is a pyrrolidone carboxylic acid (Q29). Cystine bridges form between C65–C91 and C89–C123. An N-linked (GlcNAc...) asparagine glycan is attached at N105.

Belongs to the PIP family. In terms of assembly, monomer. Interacts with AZGP1.

It localises to the secreted. This chain is Prolactin-inducible protein homolog (PIP), found in Pongo pygmaeus (Bornean orangutan).